The chain runs to 758 residues: Vitamin K-dependent gamma-carboxylase (758 aa).

A disordered region spans residues 1 to 22 (MAVSAGSARTSPSSDKVQKDKA). Alanine 2 carries the post-translational modification N-acetylalanine. The Cytoplasmic segment spans residues 2-60 (AVSAGSARTSPSSDKVQKDKAELISGPRQDSRIGKLLGFEWTDLSSWRRLVTLLNRPTD). A helical membrane pass occupies residues 61-81 (PASLAVFRFLFGFLMVLDIPQ). Residues 82-113 (ERGLSSLDRKYLDGLDVCRFPLLDALRPLPLD) are Lumenal-facing. A disulfide bridge links cysteine 99 with cysteine 450. Residues 114-134 (WMYLVYTIMFLGALGMMLGLC) traverse the membrane as a helical segment. The Cytoplasmic segment spans residues 135 to 136 (YR). A helical transmembrane segment spans residues 137 to 157 (ISCVLFLLPYWYVFLLDKTSW). At 158–292 (NNHSYLYGLL…VSYFHCMNSQ (135 aa)) the chain is on the lumenal side. The active-site Proton acceptor is the lysine 218. The chain crosses the membrane as a helical span at residues 293-313 (LFSIGMFSYVMLASSPLFCSP). Residues 314-361 (EWPRKLVSYCPRRLQQLLPLKAAPQPSVSCVYKRSRGKSGQKPGLRHQ) are Cytoplasmic-facing. The chain crosses the membrane as a helical span at residues 362 to 382 (LGAAFTLLYLLEQLFLPYSHF). The Lumenal segment spans residues 383 to 758 (LTQGYNNWTN…SNPDPVHSEF (376 aa)). Asparagine 459 and asparagine 550 each carry an N-linked (GlcNAc...) asparagine glycan. Residues 732–758 (GELNPSNTDSSHSNPPESNPDPVHSEF) are disordered. The span at 735-747 (NPSNTDSSHSNPP) shows a compositional bias: polar residues.

Belongs to the vitamin K-dependent gamma-carboxylase family. Monomer. May interact with CALU.

The protein resides in the endoplasmic reticulum membrane. It carries out the reaction 4-carboxy-L-glutamyl-[protein] + 2,3-epoxyphylloquinone + H2O + H(+) = phylloquinol + L-glutamyl-[protein] + CO2 + O2. Its function is as follows. Mediates the vitamin K-dependent carboxylation of glutamate residues to calcium-binding gamma-carboxyglutamate (Gla) residues with the concomitant conversion of the reduced hydroquinone form of vitamin K to vitamin K epoxide. Catalyzes gamma-carboxylation of various proteins, such as blood coagulation factors (F2, F7, F9 and F10), osteocalcin (BGLAP) or matrix Gla protein (MGP). The protein is Vitamin K-dependent gamma-carboxylase (GGCX) of Homo sapiens (Human).